A 456-amino-acid polypeptide reads, in one-letter code: Probable multidrug resistance protein NorM (456 aa).

12 helical membrane-spanning segments follow: residues 13-34 (QFLTIFTPIVITQLTLFSMTFF), 54-76 (SSFWAPVNAAFSGLLMAITPIIA), 95-117 (LYIALFLAFILILINFLVVPMIL), 132-154 (HFLNGICIGIPAFFISAILRSFI), 161-183 (RVTMLITLCTVPFNIFLNYCFIF), 193-215 (GAGSGYATGITYWLVVLVSVILI), 244-266 (IGVPNGLTILFETSIFSAVTILM), 286-308 (LLYAFPLSVASTLTILGGYETGA), 321-343 (GMAAAILIGCVNGAILFFFRDII), 358-380 (MHFLVYAILFQFADAVLSPVLGA), 387-409 (VTVTSIVAFISYWLIGLPVGYGL), and 414-436 (LGPFGYWIGLSTGLFVAAFILSI).

Belongs to the multi antimicrobial extrusion (MATE) (TC 2.A.66.1) family.

The protein resides in the cell membrane. Multidrug efflux pump. In Listeria monocytogenes serovar 1/2a (strain ATCC BAA-679 / EGD-e), this protein is Probable multidrug resistance protein NorM (norM).